The following is a 115-amino-acid chain: uncharacterized protein (115 aa).

A run of 3 helical transmembrane segments spans residues 10–30, 47–67, and 77–97; these read IAIL…SFWL, ASGI…ATVA, and VHFF…AIIV.

The protein resides in the cell membrane. This is an uncharacterized protein from Mycoplasma genitalium (strain ATCC 33530 / DSM 19775 / NCTC 10195 / G37) (Mycoplasmoides genitalium).